An 810-amino-acid polypeptide reads, in one-letter code: Volume-regulated anion channel subunit LRRC8A (810 aa).

The residue at position 1 (methionine 1) is an N-acetylmethionine. Residues 1 to 22 (MIPVTELRYFADTQPAYRILKP) are Cytoplasmic-facing. Residues 23–47 (WWDVFTDYISIVMLMIAVFGGTLQV) traverse the membrane as a helical segment. At 48–123 (TQDKMICLPC…YENRLHWFAK (76 aa)) the chain is on the extracellular side. 3 disulfide bridges follow: cysteine 54–cysteine 310, cysteine 57–cysteine 65, and cysteine 113–cysteine 295. Residues asparagine 66 and asparagine 83 are each glycosylated (N-linked (GlcNAc...) asparagine). A helical transmembrane segment spans residues 124 to 142 (YFPYLVLLHTLIFLACSNF). Over 143 to 264 (WFKFPRTSSK…EEGDIVYRLY (122 aa)) the chain is Cytoplasmic. Threonine 200 bears the Phosphothreonine mark. The residue at position 202 (serine 202) is a Phosphoserine. Threonine 215 carries the phosphothreonine modification. Serine 217 bears the Phosphoserine mark. A helical transmembrane segment spans residues 265–286 (MRQTIIKVIKFALIICYTVYYV). Over 287–316 (HNIKFDVDCTVDIESLTGYRTYRCAHPLAT) the chain is Extracellular. The helical transmembrane segment at 317–341 (LFKILASFYISLVIFYGLICMYTLW) threads the bilayer. Residues 342 to 810 (WMLRRSLKKY…RLWRADKEQA (469 aa)) lie on the Cytoplasmic side of the membrane. LRR repeat units lie at residues 411 to 422 (WTLDKLRQRLTK), 423 to 445 (NAQD…VFDL), 447 to 468 (ELEV…IAQL), 469 to 492 (TGLK…AFLR), 493 to 515 (ENLR…IYSL), 518 to 542 (LEEL…GLRE), 543 to 565 (LKRL…VTDV), 567 to 589 (VHLQ…SLKK), 590 to 613 (MVNL…IFSL), 614 to 637 (HNLQ…SFQH), 639 to 661 (HRLT…IGNL), 662 to 684 (TNLE…LFYC), 686 to 707 (KLRY…IGLL), 708 to 730 (QNLQ…LFQC), 732 to 753 (KLRA…VGEL), 754 to 776 (TNLT…LGEC), and 778 to 801 (LLKR…VKER). Positions 706–707 (LL) match the Di-leucine motif motif.

It belongs to the LRRC8 family. As to quaternary structure, heterohexamer; oligomerizes with other LRRC8 proteins (LRRC8B, LRRC8C, LRRC8D and/or LRRC8E) to form a heterohexamer. Can form homohexamers in vitro, but these have lower conductance than heterohexamers. In vivo, the subunit composition may depend primarily on expression levels, and heterooligomeric channels containing various proportions of the different LRRC8 proteins may coexist. Interact with GRB2. Interacts with NOX4; this interaction prevents the ubiquitin-mediated degradation of LRRC8A. In terms of processing, N-glycosylated. Ubiquitously expressed. High levels detected in the bone marrow; lower levels found in peripheral blood cells. Highly expressed in pancreatic beta cells.

It localises to the cell membrane. Its subcellular location is the lysosome membrane. The catalysed reaction is chloride(in) = chloride(out). The enzyme catalyses iodide(out) = iodide(in). It catalyses the reaction taurine(out) = taurine(in). It carries out the reaction L-aspartate(out) = L-aspartate(in). The catalysed reaction is L-glutamate(out) = L-glutamate(in). The enzyme catalyses myo-inositol(out) = myo-inositol(in). It catalyses the reaction 2',3'-cGAMP(out) = 2',3'-cGAMP(in). Inhibited by (4-[(2-butyl-6,7-dichloro-2-cyclopentyl-2,3-dihydro-1-oxo-1H-inden-5-yl)oxy]butanoic acid), which plugs the channel like a cork in a bottle by binding in the extracellular selectivity filter and sterically occluding ion conduction. Lipids may block conduction in closed heterohexameric channels. Essential component of the volume-regulated anion channel (VRAC, also named VSOAC channel), an anion channel required to maintain a constant cell volume in response to extracellular or intracellular osmotic changes. The VRAC channel conducts iodide better than chloride and can also conduct organic osmolytes like taurine. Mediates efflux of amino acids, such as aspartate and glutamate, in response to osmotic stress. In complex with LRRC8C or LRRC8E, acts as a transporter of immunoreactive cyclic dinucleotide GMP-AMP (2'-3'-cGAMP), an immune messenger produced in response to DNA virus in the cytosol: mediates both import and export of 2'-3'-cGAMP, thereby promoting transfer of 2'-3'-cGAMP to bystander cells. In contrast, complexes containing LRRC8D inhibit transport of 2'-3'-cGAMP. Required for in vivo channel activity, together with at least one other family member (LRRC8B, LRRC8C, LRRC8D or LRRC8E); channel characteristics depend on the precise subunit composition. Can form functional channels by itself (in vitro). Involved in B-cell development: required for the pro-B cell to pre-B cell transition. Also required for T-cell development. Required for myoblast differentiation: VRAC activity promotes membrane hyperpolarization and regulates insulin-stimulated glucose metabolism and oxygen consumption. Also acts as a regulator of glucose-sensing in pancreatic beta cells: VRAC currents, generated in response to hypotonicity- or glucose-induced beta cell swelling, depolarize cells, thereby causing electrical excitation, leading to increase glucose sensitivity and insulin secretion. Also plays a role in lysosome homeostasis by forming functional lysosomal VRAC channels in response to low cytoplasmic ionic strength condition: lysosomal VRAC channels are necessary for the formation of large lysosome-derived vacuoles, which store and then expel excess water to maintain cytosolic water homeostasis. Acts as a key factor in NLRP3 inflammasome activation by modulating itaconate efflux and mitochondria function. This Mus musculus (Mouse) protein is Volume-regulated anion channel subunit LRRC8A.